A 366-amino-acid chain; its full sequence is 3-dehydroquinate synthase (366 aa).

NAD(+)-binding positions include aspartate 69 to lysine 74, glycine 103 to aspartate 107, threonine 127 to threonine 128, lysine 140, lysine 149, and threonine 167 to threonine 170. Glutamate 182, histidine 245, and histidine 262 together coordinate Zn(2+).

This sequence belongs to the sugar phosphate cyclases superfamily. Dehydroquinate synthase family. The cofactor is Co(2+). It depends on Zn(2+) as a cofactor. NAD(+) is required as a cofactor.

Its subcellular location is the cytoplasm. It carries out the reaction 7-phospho-2-dehydro-3-deoxy-D-arabino-heptonate = 3-dehydroquinate + phosphate. It participates in metabolic intermediate biosynthesis; chorismate biosynthesis; chorismate from D-erythrose 4-phosphate and phosphoenolpyruvate: step 2/7. Its function is as follows. Catalyzes the conversion of 3-deoxy-D-arabino-heptulosonate 7-phosphate (DAHP) to dehydroquinate (DHQ). The polypeptide is 3-dehydroquinate synthase (Pseudomonas fluorescens (strain SBW25)).